The primary structure comprises 261 residues: Kallikrein-1E2 (261 aa).

An N-terminal signal peptide occupies residues 1–17; the sequence is MWFLVLCLDLSLGETGA. A propeptide spans 18–24 (activation peptide); the sequence is LPPIQSR. A Peptidase S1 domain is found at 25–258; the sequence is IIGGWECEKH…HLKWIKETIE (234 aa). 5 disulfides stabilise this stretch: C31–C173, C50–C66, C152–C219, C184–C198, and C209–C234. H65 (charge relay system) is an active-site residue. N79 carries an N-linked (GlcNAc...) asparagine glycan. The active-site Charge relay system is D120. The Charge relay system role is filled by S213.

The protein belongs to the peptidase S1 family. Kallikrein subfamily. As to expression, detected in prostate and semen.

The protein resides in the secreted. It carries out the reaction Preferential cleavage of Arg-|-Xaa bonds in small molecule substrates. Highly selective action to release kallidin (lysyl-bradykinin) from kininogen involves hydrolysis of Met-|-Xaa or Leu-|-Xaa.. In terms of biological role, glandular kallikreins cleave Met-Lys and Arg-Ser bonds in kininogen to release Lys-bradykinin. The protein is Kallikrein-1E2 (KLK1E2) of Equus caballus (Horse).